Here is a 118-residue protein sequence, read N- to C-terminus: Acidic elicitin A1 (118 aa).

An N-terminal signal peptide occupies residues 1-20 (MNFRALFAATVAALVGSTSA). 3 disulfides stabilise this stretch: Cys23-Cys91, Cys47-Cys76, and Cys71-Cys115.

Belongs to the elicitin family.

It is found in the secreted. In terms of biological role, induces local and distal defense responses (incompatible hypersensitive reaction) in plants from the solanaceae and cruciferae families. Elicits leaf necrosis and causes the accumulation of pathogenesis-related proteins. Might interact with the lipidic molecules of the plasma membrane. The chain is Acidic elicitin A1 (B14) from Phytophthora cryptogea.